The primary structure comprises 127 residues: Fluoride-specific ion channel FluC (127 aa).

Transmembrane regions (helical) follow at residues 8–28, 37–57, 68–88, and 100–120; these read LLIA…QYWF, PWGT…VYAI, WKFL…TFSY, and ILFL…AFAG. Na(+) contacts are provided by Gly78 and Thr81.

The protein belongs to the fluoride channel Fluc/FEX (TC 1.A.43) family.

Its subcellular location is the cell inner membrane. The catalysed reaction is fluoride(in) = fluoride(out). Na(+) is not transported, but it plays an essential structural role and its presence is essential for fluoride channel function. Functionally, fluoride-specific ion channel. Important for reducing fluoride concentration in the cell, thus reducing its toxicity. In Leptospira interrogans serogroup Icterohaemorrhagiae serovar Lai (strain 56601), this protein is Fluoride-specific ion channel FluC.